We begin with the raw amino-acid sequence, 239 residues long: Small ribosomal subunit protein uS3c (239 aa).

Positions 43–139 (IKNYIQKNRK…RFNISIEKVK (97 aa)) constitute a KH type-2 domain. The disordered stretch occupies residues 50-74 (NRKKGSNRKIESDSSSEVITHNRKM).

The protein belongs to the universal ribosomal protein uS3 family. In terms of assembly, part of the 30S ribosomal subunit.

The protein resides in the plastid. Its subcellular location is the chloroplast. This Hordeum vulgare (Barley) protein is Small ribosomal subunit protein uS3c (rps3).